The sequence spans 820 residues: Probable protease Ga0182885_104520 (820 aa).

The protein belongs to the peptidase C25 family.

In terms of biological role, probably a dedicated protease for substrate gasdermin bGSDM; cleaves the bGSDM precursor, releasing the pore-forming moiety, which integrates into the membrane and triggers cell death. Involved in defense against bacteriophages. Expression of bacterial gasdermin (bGSDM) and this neighboring protease is toxic in E.coli. The chain is Probable protease Ga0182885_104520 from Desulfuromonadales bacterium.